Reading from the N-terminus, the 502-residue chain is Glycerol kinase (502 aa).

Thr13 serves as a coordination point for ADP. The ATP site is built by Thr13, Thr14, and Ser15. Thr13 lines the sn-glycerol 3-phosphate pocket. Arg17 serves as a coordination point for ADP. Sn-glycerol 3-phosphate-binding residues include Arg83, Glu84, Tyr136, and Asp246. Glycerol is bound by residues Arg83, Glu84, Tyr136, Asp246, and Gln247. The ADP site is built by Thr268 and Gly311. ATP-binding residues include Thr268, Gly311, Gln315, and Gly412. ADP contacts are provided by Gly412 and Asn416.

This sequence belongs to the FGGY kinase family.

The catalysed reaction is glycerol + ATP = sn-glycerol 3-phosphate + ADP + H(+). Its pathway is polyol metabolism; glycerol degradation via glycerol kinase pathway; sn-glycerol 3-phosphate from glycerol: step 1/1. With respect to regulation, inhibited by fructose 1,6-bisphosphate (FBP). Its function is as follows. Key enzyme in the regulation of glycerol uptake and metabolism. Catalyzes the phosphorylation of glycerol to yield sn-glycerol 3-phosphate. The protein is Glycerol kinase of Francisella tularensis subsp. mediasiatica (strain FSC147).